Consider the following 229-residue polypeptide: Endonuclease V (229 aa).

The Mg(2+) site is built by Asp36 and Asp104.

The protein belongs to the endonuclease V family. Mg(2+) serves as cofactor.

The protein resides in the cytoplasm. The enzyme catalyses Endonucleolytic cleavage at apurinic or apyrimidinic sites to products with a 5'-phosphate.. In terms of biological role, DNA repair enzyme involved in the repair of deaminated bases. Selectively cleaves double-stranded DNA at the second phosphodiester bond 3' to a deoxyinosine leaving behind the intact lesion on the nicked DNA. This is Endonuclease V from Pectobacterium carotovorum subsp. carotovorum (strain PC1).